Here is a 1462-residue protein sequence, read N- to C-terminus: MSNKFEILMNQLDMPLEMRNSEAFLNAEIEKVLVHKVSRVWEFHFSFANILPIEIFRELQKRLAQEFSKTGNQAVFEIHCQAPQVSDELLQAYYQLAFEEGPCASHGFKSLYQDLRVHLDGDKLLIEGASTIDTEHFRKNHLPNLSQQLVKYGFPQLTCLVQHSDELTQQQAENFQAENDKIVQAANEEALKAMESLQQMAPPPEEKPAYDFQARKAAAKPKLDKAEITPMIEVQTEENRLVFEGMVFDLEQKVTRTGRVLLNFKMTDYTSSFSLQKWMKNEEEAKKFDMIKKGAWLRVRGNVEMNNFTRDLTMNVQDVQAVTHYERKDLMPEGQKRVEFHAHTNMSTMDALPEVEEIVATAAKWGHKAVAITDHGNVQSFPHGYKAAKKAGIQLIYGMEANIVEDRVPIVYNEVDMELSDATYVVFDVETTGLSAVYNDLIQVAASKMHKGNIIAEFDEFINPGHPLSAFTTDLTGITDEHVRNAKPLEQVLKEFQEFCQDSVLVAHNATFDVGFMNVNYERHGLPKIIQPVIDTLEFARNLYPEYKRHGLGPLTKRFQIALEHHHMANYDAEATGRLLFIFIKDVAEKHGVTNLKDLNTDLVDENSYKKARVKHATIYVKNQTGLKNIFKLVSLSNTKYFEGVPRIPRTVLDAHREGLILGSACSEGEVYDAVVSQGVDAAVEVAKYYDFIEVMPPAIYEPLIAKEQIKDQEELQTIIRNLIEVGDRLGKPVLATGNVHYIEPEEEIYREIIVRSLGQGAMINRTIGHGENAQPAPLPKAHFRTTNEMLDEFAFLGEDLAKKLVITNPNQLAETFEPVEVVKGDLYTPFIDKAEETVAELTYQKAFEIYGNPLPDIVDLRIEKELTSILGNGFAVIYLASQMLVQRSNERGYLVGSRGSVGSSFVATMIGITEVNPLSPHYVCGKCQYSEFITDGSYGSGFDMPDKDCPECGHKLSKNGQDIPFETFLGFDGDKVPDIDLNFSGEDQPSAHLDVRDIFGSEYAFRAGTVGTVAAKTAYGFVKGYERDYGKFYRDAEVERLAQGAAGVKRTTGQHPGGIVVIPNYMDVYDFTPVQYPADDVTAEWQTTHFNFHDIDENVLKLDVLGHDDPTMIRKLQDLSGIDPNDIPMDDAGVMALFSGTDILGVTQEQIGTPTGMLGIPEFGTNFVRGMVDETHPTTFAELLQLSGLSHGTDVWLGNAQDLIKQGIADLSTVIGCRDDIMVYLMHKGLDPKMAFTIMERVRKGLWLKISEEERNGYIAAMKENNVPEWYIESCGKIKYMFPKAHAAAYVMMALRVAYFKVHHPIYYYCAYFSIRAKAFDIKTMSGGLDAVKRRMSEIAEKRKNNEASNVEIDLYTTLEIVNEMLERGFKFGKLDLYKSHATEFLIEGDTLIPPFSAMDGLGDNVARQVVRAREEGEFLSKTELRKRGGLSSTLVEKMDDMGILGNMPEDNQLSLFDEFF.

The region spanning 424 to 580 is the Exonuclease domain; it reads YVVFDVETTG…YDAEATGRLL (157 aa).

The protein belongs to the DNA polymerase type-C family. PolC subfamily.

The protein resides in the cytoplasm. It carries out the reaction DNA(n) + a 2'-deoxyribonucleoside 5'-triphosphate = DNA(n+1) + diphosphate. Functionally, required for replicative DNA synthesis. This DNA polymerase also exhibits 3' to 5' exonuclease activity. This chain is DNA polymerase III PolC-type, found in Streptococcus sanguinis (strain SK36).